The primary structure comprises 509 residues: Subtelomeric hrmA-associated cluster protein AFUA_5G14880 (509 aa).

Part of the subtelomeric hrmA-associated cluster (HAC) containing genes that alter the hyphal surface (such as reduced total chitin or increased beta-glucan exposure) and perturb inter-hyphal interactions within the developing biofilms, resulting in a loss of vertically aligned polarized growing filaments. Consequently, this hypoxia-typic morphotype (called H-MORPH) with altered biofilm architecture leads to increased hypoxia fitness, increased host inflammation, rapid disease progression, and mortality in a murine model of invasive aspergillosis. The polypeptide is Subtelomeric hrmA-associated cluster protein AFUA_5G14880 (Aspergillus fumigatus (strain ATCC MYA-4609 / CBS 101355 / FGSC A1100 / Af293) (Neosartorya fumigata)).